The following is a 91-amino-acid chain: UPF0250 protein PSPTO_4820 (91 aa).

The protein belongs to the UPF0250 family.

The polypeptide is UPF0250 protein PSPTO_4820 (Pseudomonas syringae pv. tomato (strain ATCC BAA-871 / DC3000)).